We begin with the raw amino-acid sequence, 156 residues long: Small ribosomal subunit protein uS7 (156 aa).

This sequence belongs to the universal ribosomal protein uS7 family. Part of the 30S ribosomal subunit. Contacts proteins S9 and S11.

Its function is as follows. One of the primary rRNA binding proteins, it binds directly to 16S rRNA where it nucleates assembly of the head domain of the 30S subunit. Is located at the subunit interface close to the decoding center, probably blocks exit of the E-site tRNA. This chain is Small ribosomal subunit protein uS7, found in Thermomicrobium roseum (strain ATCC 27502 / DSM 5159 / P-2).